A 145-amino-acid polypeptide reads, in one-letter code: MKIKIQKIHPNALIPKYQTEGSSGFDLHAVEEVTIKPHSVGLVKIGICLSLEVGYELQVRTRSGLALNHQVMVLNSPGTVDNDYRGEIKVILANLSDKDFKVQVGDRIAQGVVQKTYKAEFIECEQLDETSRGSGGFGSTGVSKA.

Residues 62 to 64 (RSG), N75, 79 to 81 (TVD), and K89 contribute to the substrate site.

Belongs to the dUTPase family. Mg(2+) is required as a cofactor.

The enzyme catalyses dUTP + H2O = dUMP + diphosphate + H(+). Its pathway is pyrimidine metabolism; dUMP biosynthesis; dUMP from dCTP (dUTP route): step 2/2. Functionally, this enzyme is involved in nucleotide metabolism: it produces dUMP, the immediate precursor of thymidine nucleotides and it decreases the intracellular concentration of dUTP so that uracil cannot be incorporated into DNA. The chain is Deoxyuridine 5'-triphosphate nucleotidohydrolase from Helicobacter pylori (strain P12).